The chain runs to 42 residues: Photosystem I reaction center subunit IX (42 aa).

A helical transmembrane segment spans residues 7–27 (YLSTAPVLATLWFGFLAGLLI).

This sequence belongs to the PsaJ family.

It is found in the plastid. The protein localises to the chloroplast thylakoid membrane. Functionally, may help in the organization of the PsaE and PsaF subunits. The chain is Photosystem I reaction center subunit IX from Huperzia lucidula (Shining clubmoss).